The chain runs to 554 residues: Acetyl-S-ACP:malonate ACP transferase (554 aa).

The protein localises to the cytoplasm. It catalyses the reaction acetyl-[ACP] + malonate = malonyl-[ACP] + acetate. Functionally, alpha subunit of the biotin-independent and biotin-dependent malonate decarboxylase multienzyme complex (EC 4.1.1.88 and EC 7.2.4.4, respectively). Acts as an acyl-carrier protein (ACP) transferase component. This first step in malonate decarboxylation involves the exchange of an acetyl thioester residue bound to the activated ACP subunit for a malonyl thioester residue. Has a weak activity with acetyl-CoA as substrate. The sequence is that of Acetyl-S-ACP:malonate ACP transferase (madA) from Malonomonas rubra.